A 120-amino-acid chain; its full sequence is NADH-quinone oxidoreductase subunit A (120 aa).

Transmembrane regions (helical) follow at residues 6–26 (YGII…ALAT), 63–83 (FLYA…YPWA), and 89–109 (LGLF…LGLW).

The protein belongs to the complex I subunit 3 family. NDH-1 is composed of 14 different subunits. Subunits NuoA, H, J, K, L, M, N constitute the membrane sector of the complex.

The protein localises to the cell membrane. The catalysed reaction is a quinone + NADH + 5 H(+)(in) = a quinol + NAD(+) + 4 H(+)(out). Functionally, NDH-1 shuttles electrons from NADH, via FMN and iron-sulfur (Fe-S) centers, to quinones in the respiratory chain. The immediate electron acceptor for the enzyme in this species is believed to be a menaquinone. Couples the redox reaction to proton translocation (for every two electrons transferred, four hydrogen ions are translocated across the cytoplasmic membrane), and thus conserves the redox energy in a proton gradient. The sequence is that of NADH-quinone oxidoreductase subunit A from Moorella thermoacetica (strain ATCC 39073 / JCM 9320).